The following is a 266-amino-acid chain: Hydroxyethylthiazole kinase (266 aa).

Substrate is bound at residue Met-43. 2 residues coordinate ATP: Arg-119 and Thr-166. Residue Gly-193 coordinates substrate.

Belongs to the Thz kinase family. It depends on Mg(2+) as a cofactor.

The enzyme catalyses 5-(2-hydroxyethyl)-4-methylthiazole + ATP = 4-methyl-5-(2-phosphooxyethyl)-thiazole + ADP + H(+). It functions in the pathway cofactor biosynthesis; thiamine diphosphate biosynthesis; 4-methyl-5-(2-phosphoethyl)-thiazole from 5-(2-hydroxyethyl)-4-methylthiazole: step 1/1. Its function is as follows. Catalyzes the phosphorylation of the hydroxyl group of 4-methyl-5-beta-hydroxyethylthiazole (THZ). This Methanococcus maripaludis (strain C7 / ATCC BAA-1331) protein is Hydroxyethylthiazole kinase.